Consider the following 115-residue polypeptide: uncharacterized protein (115 aa).

The next 3 membrane-spanning stretches (helical) occupy residues 10 to 30 (IAIL…SFWL), 47 to 67 (ASGI…ATVA), and 77 to 97 (VHFF…AIIV).

It is found in the cell membrane. This is an uncharacterized protein from Mycoplasma genitalium (strain ATCC 33530 / DSM 19775 / NCTC 10195 / G37) (Mycoplasmoides genitalium).